Reading from the N-terminus, the 239-residue chain is Orotidine 5'-phosphate decarboxylase (239 aa).

Residues Asp11, Lys33, 60 to 69 (DLKFHDIPTT), Thr117, Arg178, Gln187, Gly207, and Arg208 contribute to the substrate site. The Proton donor role is filled by Lys62.

This sequence belongs to the OMP decarboxylase family. Type 1 subfamily. Homodimer.

The catalysed reaction is orotidine 5'-phosphate + H(+) = UMP + CO2. It functions in the pathway pyrimidine metabolism; UMP biosynthesis via de novo pathway; UMP from orotate: step 2/2. In terms of biological role, catalyzes the decarboxylation of orotidine 5'-monophosphate (OMP) to uridine 5'-monophosphate (UMP). In Nitrosospira multiformis (strain ATCC 25196 / NCIMB 11849 / C 71), this protein is Orotidine 5'-phosphate decarboxylase.